A 129-amino-acid polypeptide reads, in one-letter code: MAAAAMEADEQHRIRFQLELEFVQCLANPNYLNFLAQRGYFKDKSFVNYLKYLLYWKDPEYAKYLKYPQCLHMLELLQYEHFRKELVNAQCAKFIDEQQILHWQHYSRKRMRMQQALAEQQQQNNTSSK.

It belongs to the Mediator complex subunit 31 family. Component of the Mediator complex.

It is found in the nucleus. Its function is as follows. Component of the Mediator complex, a coactivator involved in the regulated transcription of nearly all RNA polymerase II-dependent genes. Mediator functions as a bridge to convey information from gene-specific regulatory proteins to the basal RNA polymerase II transcription machinery. Mediator is recruited to promoters by direct interactions with regulatory proteins and serves as a scaffold for the assembly of a functional preinitiation complex with RNA polymerase II and the general transcription factors. The protein is Mediator of RNA polymerase II transcription subunit 31-B (med31-b) of Xenopus laevis (African clawed frog).